Here is a 410-residue protein sequence, read N- to C-terminus: uncharacterized protein (410 aa).

Residue 11–39 (VLVIGGGPSGTALSAELAARGLDVQQLAP) coordinates NAD(+).

It belongs to the lycopene cyclase family.

This is an uncharacterized protein from Deinococcus radiodurans (strain ATCC 13939 / DSM 20539 / JCM 16871 / CCUG 27074 / LMG 4051 / NBRC 15346 / NCIMB 9279 / VKM B-1422 / R1).